The following is a 76-amino-acid chain: Small ribosomal subunit protein bS16 (76 aa).

The protein belongs to the bacterial ribosomal protein bS16 family.

The protein is Small ribosomal subunit protein bS16 of Helicobacter pylori (strain HPAG1).